We begin with the raw amino-acid sequence, 227 residues long: MVAIAPVITVDGPSGAGKGTLCQALAEVLGWQLLDSGAIYRVLALAAIHHQVDIQSEDALVPLAANLDVRFVPRKGKLSVMLEGEDVSNEIRTEAVGNTASQAAAFPRVREALLRRQRAFRVAPGLIADGRDMGTVVFSDAPVKIFLDASAEERARRRMLQLQEKGFSVNFECLLSEIQERDYRDRNRAVAPLAPAKDALILDSTSMSIEEVIDKALNYAKKILSIT.

Gly-12–Thr-20 serves as a coordination point for ATP.

Belongs to the cytidylate kinase family. Type 1 subfamily.

It localises to the cytoplasm. The enzyme catalyses CMP + ATP = CDP + ADP. It catalyses the reaction dCMP + ATP = dCDP + ADP. This chain is Cytidylate kinase, found in Photorhabdus laumondii subsp. laumondii (strain DSM 15139 / CIP 105565 / TT01) (Photorhabdus luminescens subsp. laumondii).